The sequence spans 282 residues: Pantothenate synthetase (282 aa).

M30–H37 serves as a coordination point for ATP. The active-site Proton donor is the H37. A (R)-pantoate-binding site is contributed by Q61. A beta-alanine-binding site is contributed by Q61. G147–D150 is a binding site for ATP. Q153 lines the (R)-pantoate pocket. ATP is bound by residues V176 and K184–R187.

Belongs to the pantothenate synthetase family. Homodimer.

The protein resides in the cytoplasm. It carries out the reaction (R)-pantoate + beta-alanine + ATP = (R)-pantothenate + AMP + diphosphate + H(+). It participates in cofactor biosynthesis; (R)-pantothenate biosynthesis; (R)-pantothenate from (R)-pantoate and beta-alanine: step 1/1. In terms of biological role, catalyzes the condensation of pantoate with beta-alanine in an ATP-dependent reaction via a pantoyl-adenylate intermediate. This chain is Pantothenate synthetase, found in Bacillus thuringiensis (strain Al Hakam).